We begin with the raw amino-acid sequence, 610 residues long: Elongation factor 4 (610 aa).

The tr-type G domain occupies 11-193 (EKIRNFSIIA…QIVEKVPAPT (183 aa)). GTP is bound by residues 23–28 (DHGKST) and 140–143 (NKID).

The protein belongs to the TRAFAC class translation factor GTPase superfamily. Classic translation factor GTPase family. LepA subfamily.

Its subcellular location is the cell membrane. It catalyses the reaction GTP + H2O = GDP + phosphate + H(+). Its function is as follows. Required for accurate and efficient protein synthesis under certain stress conditions. May act as a fidelity factor of the translation reaction, by catalyzing a one-codon backward translocation of tRNAs on improperly translocated ribosomes. Back-translocation proceeds from a post-translocation (POST) complex to a pre-translocation (PRE) complex, thus giving elongation factor G a second chance to translocate the tRNAs correctly. Binds to ribosomes in a GTP-dependent manner. In Streptococcus pyogenes serotype M3 (strain ATCC BAA-595 / MGAS315), this protein is Elongation factor 4.